Consider the following 272-residue polypeptide: Hemin import ATP-binding protein HmuV (272 aa).

The region spanning 2–255 is the ABC transporter domain; the sequence is LNADHLHVAR…EPIARCYGFR (254 aa). 34–41 contributes to the ATP binding site; that stretch reads GRNGAGKS.

This sequence belongs to the ABC transporter superfamily. Heme (hemin) importer (TC 3.A.1.14.5) family. In terms of assembly, the complex is composed of two ATP-binding proteins (HmuV), two transmembrane proteins (HmuU) and a solute-binding protein (HmuT).

The protein resides in the cell inner membrane. Its function is as follows. Part of the ABC transporter complex HmuTUV involved in hemin import. Responsible for energy coupling to the transport system. The protein is Hemin import ATP-binding protein HmuV of Burkholderia pseudomallei (strain 1710b).